Here is a 332-residue protein sequence, read N- to C-terminus: Phosphate acyltransferase (332 aa).

It belongs to the PlsX family. Homodimer. Probably interacts with PlsY.

The protein localises to the cytoplasm. The enzyme catalyses a fatty acyl-[ACP] + phosphate = an acyl phosphate + holo-[ACP]. Its pathway is lipid metabolism; phospholipid metabolism. Catalyzes the reversible formation of acyl-phosphate (acyl-PO(4)) from acyl-[acyl-carrier-protein] (acyl-ACP). This enzyme utilizes acyl-ACP as fatty acyl donor, but not acyl-CoA. The polypeptide is Phosphate acyltransferase (Oceanobacillus iheyensis (strain DSM 14371 / CIP 107618 / JCM 11309 / KCTC 3954 / HTE831)).